The sequence spans 155 residues: Small ribosomal subunit protein uS7cz/uS7cy (155 aa).

It belongs to the universal ribosomal protein uS7 family. As to quaternary structure, part of the 30S ribosomal subunit.

It is found in the plastid. It localises to the chloroplast. In terms of biological role, one of the primary rRNA binding proteins, it binds directly to 16S rRNA where it nucleates assembly of the head domain of the 30S subunit. The polypeptide is Small ribosomal subunit protein uS7cz/uS7cy (rps7-A) (Ceratophyllum demersum (Rigid hornwort)).